Here is a 209-residue protein sequence, read N- to C-terminus: Putative thymidylate synthase (209 aa).

Cys137 is a catalytic residue.

Belongs to the thymidylate synthase family. Archaeal-type ThyA subfamily. As to quaternary structure, monomer.

The protein localises to the cytoplasm. The protein operates within pyrimidine metabolism; dTTP biosynthesis. In terms of biological role, may catalyze the biosynthesis of dTMP using an unknown cosubstrate. The protein is Putative thymidylate synthase of Methanopyrus kandleri (strain AV19 / DSM 6324 / JCM 9639 / NBRC 100938).